A 633-amino-acid chain; its full sequence is Ankyrin repeat and SOCS box protein 2 (633 aa).

Residues 26 to 45 form the UIM domain; sequence SEDELVQMAIEQSLADKTRG. ANK repeat units lie at residues 102–131, 135–165, 169–198, 202–231, 235–264, 268–297, 301–330, 334–363, 366–395, 408–437, 438–467, and 474–502; these read APVDPVLKAIKEDDEEALTAMIKAGKNLSE, EGWLPLHEAAYYGQLNCLKALHRAYPAVIDQ, QEETALYLATCRGHVDCLQFLLQAGAEPDI, SRETPLYKACERKNVEAVRILVQYKADTNH, RGWTALHESVARNDLEVMEILVSGGAKVEA, YGITPLFVAAQSGQLEALRFLAKYGADINT, DSASALYEACKNGHEEVVEFLLSQGADANK, DGMLPLHIASKKGNYRIVQMLLPVTSRTRV, SGISPLHLAAERNNDEVLEALLGARFDVNA, RRSSALYFAVVNNNVYATELLLLAGADPNR, DVINPLLVAIRHGCLRTMQLLLDHGANIDA, and TAFPATIMFAMKCLSLLKFLMDLGCNGEP. Ser-369 is subject to Phosphoserine. Residues 579–633 form the SOCS box domain; sequence EDWAVIKEKAEPPRPLAHLCRLRVRKAIGKYRIKLLDTLPLPGRLIRYLKYENTQ.

The protein belongs to the ankyrin SOCS box (ASB) family. Component of a probable ECS E3 ubiquitin-protein ligase complex which contains CUL5, either RBX1 or RNF7/RBX2, Elongin BC complex (ELOB and ELOC) and ASB2. Interacts with SKP2. Through its interaction with SKP2, likely to bridge the formation of dimeric E3-ubiquitin-protein ligase complexes composed of an ECS complex and an SCF(SKP2) complex. Interacts with JAK2; the interaction targets JAK2 for Notch-mediated proteasomal degradation. Interacts with TCF3/E2A; the interaction is mediated by SKP2 and targets TCF3 for Notch-mediated proteasomal degradation. Interacts with DES. Post-translationally, monoubiquitinated.

It is found in the cytoplasm. Its subcellular location is the cytoskeleton. The protein localises to the stress fiber. It localises to the myofibril. The protein resides in the sarcomere. It is found in the z line. The protein operates within protein modification; protein ubiquitination. Functionally, substrate-recognition component of a SCF-like ECS (Elongin-Cullin-SOCS-box protein) E3 ubiquitin-protein ligase complex which mediates the ubiquitination and subsequent proteasomal degradation of target proteins. Mediates Notch-induced ubiquitination and degradation of substrates including E2A and JAK2. Required during embryonic heart development for complete heart looping. Required for cardiomyocyte differentiation. Involved in myogenic differentiation and targets filamin FLNB for proteasomal degradation but not filamin FLNA. Also targets DES for proteasomal degradation. Acts as a negative regulator of skeletal muscle mass. In Bos taurus (Bovine), this protein is Ankyrin repeat and SOCS box protein 2.